Here is a 283-residue protein sequence, read N- to C-terminus: Protease HtpX (283 aa).

The next 2 membrane-spanning stretches (helical) occupy residues 4–24 (ILLF…ILSV) and 33–53 (GGIL…SLFL). His139 is a binding site for Zn(2+). Glu140 is a catalytic residue. Position 143 (His143) interacts with Zn(2+). 2 helical membrane passes run 147 to 167 (GDMV…IFLS) and 190 to 210 (IYFL…SIIA). Glu218 serves as a coordination point for Zn(2+).

It belongs to the peptidase M48B family. Zn(2+) serves as cofactor.

The protein resides in the cell inner membrane. The sequence is that of Protease HtpX from Haemophilus influenzae (strain PittEE).